Consider the following 868-residue polypeptide: Leucine--tRNA ligase (868 aa).

The 'HIGH' region motif lies at 42 to 52 (PYPSGKLHMGH). Residues 627–631 (KMSKS) carry the 'KMSKS' region motif. K630 contributes to the ATP binding site.

It belongs to the class-I aminoacyl-tRNA synthetase family.

It localises to the cytoplasm. The catalysed reaction is tRNA(Leu) + L-leucine + ATP = L-leucyl-tRNA(Leu) + AMP + diphosphate. This Pseudomonas putida (strain W619) protein is Leucine--tRNA ligase.